A 173-amino-acid polypeptide reads, in one-letter code: NADH-ubiquinone oxidoreductase chain 6 (173 aa).

Transmembrane regions (helical) follow at residues 1 to 21, 27 to 47, 48 to 68, 87 to 107, and 139 to 159; these read MTYFVIFLGVCFMLGTLAVAS, YGVVGLVLASVVGCGWLVNLG, VSFVSLVLFMIYLGGMLVVFV, VMGYGLGFVLVVCMGMGLGGF, and YGVGLFLVAGWGLLLVLFVVL.

The protein belongs to the complex I subunit 6 family.

It is found in the mitochondrion membrane. It catalyses the reaction a ubiquinone + NADH + 5 H(+)(in) = a ubiquinol + NAD(+) + 4 H(+)(out). Core subunit of the mitochondrial membrane respiratory chain NADH dehydrogenase (Complex I) that is believed to belong to the minimal assembly required for catalysis. Complex I functions in the transfer of electrons from NADH to the respiratory chain. The immediate electron acceptor for the enzyme is believed to be ubiquinone. This is NADH-ubiquinone oxidoreductase chain 6 (MT-ND6) from Coturnix japonica (Japanese quail).